Here is a 39-residue protein sequence, read N- to C-terminus: Cytochrome b6-f complex subunit 5 (39 aa).

The chain crosses the membrane as a helical span at residues Leu5–Ala25.

The protein belongs to the PetG family. As to quaternary structure, the 4 large subunits of the cytochrome b6-f complex are cytochrome b6, subunit IV (17 kDa polypeptide, PetD), cytochrome f and the Rieske protein, while the 4 small subunits are PetG, PetL, PetM and PetN. The complex functions as a dimer.

It localises to the cellular thylakoid membrane. Component of the cytochrome b6-f complex, which mediates electron transfer between photosystem II (PSII) and photosystem I (PSI), cyclic electron flow around PSI, and state transitions. PetG is required for either the stability or assembly of the cytochrome b6-f complex. The sequence is that of Cytochrome b6-f complex subunit 5 from Prochlorococcus marinus (strain MIT 9211).